A 144-amino-acid polypeptide reads, in one-letter code: Nucleoside diphosphate kinase (144 aa).

6 residues coordinate ATP: Lys-5, Phe-53, Arg-81, Thr-87, Arg-98, and Asn-108. His-111 acts as the Pros-phosphohistidine intermediate in catalysis.

It belongs to the NDK family. It depends on Mg(2+) as a cofactor.

The catalysed reaction is a 2'-deoxyribonucleoside 5'-diphosphate + ATP = a 2'-deoxyribonucleoside 5'-triphosphate + ADP. The enzyme catalyses a ribonucleoside 5'-diphosphate + ATP = a ribonucleoside 5'-triphosphate + ADP. Major role in the synthesis of nucleoside triphosphates other than ATP. The ATP gamma phosphate is transferred to the NDP beta phosphate via a ping-pong mechanism, using a phosphorylated active-site intermediate. The chain is Nucleoside diphosphate kinase from Solanum lycopersicum (Tomato).